Consider the following 812-residue polypeptide: Protein FAM83G (812 aa).

Position 2 is an N-acetylalanine (Ala-2). Residues 2 to 312 (AFSQVQCLDD…LYLMSQSVSL (311 aa)) form a DUF1669 region. Ser-4 bears the Phosphoserine mark. The tract at residues 76–119 (PGSEDPRVSGRRPEPQDNGGADASEETSAAGGPPATETLPSLEY) is disordered. Residues 79–90 (EDPRVSGRRPEP) show a composition bias toward basic and acidic residues. Residues Ser-124, Ser-127, and Ser-356 each carry the phosphoserine modification. 3 disordered regions span residues 362–389 (KSSS…GDLS), 455–509 (ASAQ…KPRT), and 521–812 (SDIG…HKEP). Positions 455–467 (ASAQHQLWKQSQG) are enriched in polar residues. The segment covering 471-480 (CPAPCPPPAP) has biased composition (pro residues). The span at 545–562 (STASESEVPQQQHSSMTQ) shows a compositional bias: polar residues. The segment covering 576–586 (LDEDEDDDDDY) has biased composition (acidic residues). Residues 589 to 598 (LSDQDSLSGS) are compositionally biased toward low complexity. A phosphoserine mark is found at Ser-609, Ser-613, Ser-615, and Ser-649. Over residues 721–731 (SSSKKASPAAA) the composition is skewed to low complexity. Residues 761-772 (LRAELRATEEHA) are compositionally biased toward basic and acidic residues.

Belongs to the FAM83 family. In terms of assembly, interacts with SMAD1 (via MH2 domain); in a SMAD4-independent manner. Directly interacts (via DUF1669) with casein kinase isoforms CSNK1A1 and CSNK1A1L. Post-translationally, BMP signaling induces the phosphorylation by BMPR1A at Ser-609, Ser-613 and Ser-615. Phosphorylation at Ser-609 is necessary for the activation of SMAD4-independent BMP target genes such as NEDD9 and ASNS. In terms of processing, phosphorylated by CSNK1A1.

The protein localises to the cytoplasm. Its subcellular location is the cytosol. It is found in the nucleus. Functionally, substrate for type I BMP receptor kinase involved in regulation of some target genes of the BMP signaling pathway. Also regulates the expression of several non-BMP target genes, suggesting a role in other signaling pathways. In Mus musculus (Mouse), this protein is Protein FAM83G (Fam83g).